A 284-amino-acid chain; its full sequence is uncharacterized protein (284 aa).

The protein belongs to the methyltransferase superfamily.

It is found in the cytoplasm. It localises to the nucleus. Functionally, probable methyltransferase. This is an uncharacterized protein from Schizosaccharomyces pombe (strain 972 / ATCC 24843) (Fission yeast).